The sequence spans 310 residues: Methionyl-tRNA formyltransferase (310 aa).

(6S)-5,6,7,8-tetrahydrofolate is bound at residue 106–109 (SLLP).

Belongs to the Fmt family.

The catalysed reaction is L-methionyl-tRNA(fMet) + (6R)-10-formyltetrahydrofolate = N-formyl-L-methionyl-tRNA(fMet) + (6S)-5,6,7,8-tetrahydrofolate + H(+). In terms of biological role, attaches a formyl group to the free amino group of methionyl-tRNA(fMet). The formyl group appears to play a dual role in the initiator identity of N-formylmethionyl-tRNA by promoting its recognition by IF2 and preventing the misappropriation of this tRNA by the elongation apparatus. This chain is Methionyl-tRNA formyltransferase, found in Fervidobacterium nodosum (strain ATCC 35602 / DSM 5306 / Rt17-B1).